Reading from the N-terminus, the 366-residue chain is UDP-N-acetylglucosamine--N-acetylmuramyl-(pentapeptide) pyrophosphoryl-undecaprenol N-acetylglucosamine transferase (366 aa).

Residues T10 to G12, N124, S195, and Q295 each bind UDP-N-acetyl-alpha-D-glucosamine.

It belongs to the glycosyltransferase 28 family. MurG subfamily.

The protein resides in the cell membrane. It catalyses the reaction di-trans,octa-cis-undecaprenyl diphospho-N-acetyl-alpha-D-muramoyl-L-alanyl-D-glutamyl-meso-2,6-diaminopimeloyl-D-alanyl-D-alanine + UDP-N-acetyl-alpha-D-glucosamine = di-trans,octa-cis-undecaprenyl diphospho-[N-acetyl-alpha-D-glucosaminyl-(1-&gt;4)]-N-acetyl-alpha-D-muramoyl-L-alanyl-D-glutamyl-meso-2,6-diaminopimeloyl-D-alanyl-D-alanine + UDP + H(+). The protein operates within cell wall biogenesis; peptidoglycan biosynthesis. Functionally, cell wall formation. Catalyzes the transfer of a GlcNAc subunit on undecaprenyl-pyrophosphoryl-MurNAc-pentapeptide (lipid intermediate I) to form undecaprenyl-pyrophosphoryl-MurNAc-(pentapeptide)GlcNAc (lipid intermediate II). The chain is UDP-N-acetylglucosamine--N-acetylmuramyl-(pentapeptide) pyrophosphoryl-undecaprenol N-acetylglucosamine transferase from Bacillus licheniformis (strain ATCC 14580 / DSM 13 / JCM 2505 / CCUG 7422 / NBRC 12200 / NCIMB 9375 / NCTC 10341 / NRRL NRS-1264 / Gibson 46).